The following is a 326-amino-acid chain: Probable magnesium transporter NIPA7 (326 aa).

Over 1 to 4 (MVSD) the chain is Extracellular. Residues 5 to 25 (NEMGLVLAVSSSVFIGSSFIL) form a helical membrane-spanning segment. Over 26 to 51 (KKKGLKRAAANGTRAGFGGYTYLLEP) the chain is Cytoplasmic. Residues 52-72 (LWWVGLVTMTFGEIANFVAYV) form a helical membrane-spanning segment. Over 73 to 76 (YAPA) the chain is Extracellular. A helical transmembrane segment spans residues 77-97 (VLVTPLGALSIIISAVLAHFL). Over 98 to 104 (LDEKLRK) the chain is Cytoplasmic. The helical transmembrane segment at 105–125 (MGVWGCVCCIVGSVMIVIHAP) threads the bilayer. The Extracellular segment spans residues 126-142 (QEQTPNSVEEIWKLAMQ). A helical membrane pass occupies residues 143–163 (PAFLIYVAISMSIVLALILYC). Residues 164-169 (EPLCGQ) lie on the Cytoplasmic side of the membrane. Residues 170–190 (TNILVYIGICSLMGSLTVMSI) traverse the membrane as a helical segment. Topologically, residues 191–209 (KAVGIAIKLTFEGINQIWY) are extracellular. A helical transmembrane segment spans residues 210 to 230 (PETWFFAMVAAICVVMQMIYL). Residues 231-240 (NKALDTFNAA) are Cytoplasmic-facing. A helical transmembrane segment spans residues 241–261 (IVSPIYYVMFTTLTIVASAIM). The Extracellular portion of the chain corresponds to 262–272 (FKDWNGQNTDS). Residues 273 to 293 (IASEICGFITVLTGTVILHST) form a helical membrane-spanning segment. The Cytoplasmic segment spans residues 294-326 (REEEQASPRRMRWQDSGKSFDEEHLTSLYSPEY).

It belongs to the NIPA (TC 2.A.7) family. As to quaternary structure, homodimer.

Its subcellular location is the cell membrane. The protein localises to the early endosome. Its function is as follows. Acts as a Mg(2+) transporter. Can also transport other divalent cations such as Fe(2+), Sr(2+), Ba(2+), Mn(2+) and Co(2+) but to a much less extent than Mg(2+). In Arabidopsis thaliana (Mouse-ear cress), this protein is Probable magnesium transporter NIPA7.